The sequence spans 211 residues: Thymidylate kinase (211 aa).

Residue 7–14 (GIDASGKS) participates in ATP binding.

Belongs to the thymidylate kinase family.

The catalysed reaction is dTMP + ATP = dTDP + ADP. In terms of biological role, phosphorylation of dTMP to form dTDP in both de novo and salvage pathways of dTTP synthesis. This Mesomycoplasma hyopneumoniae (strain 232) (Mycoplasma hyopneumoniae) protein is Thymidylate kinase.